We begin with the raw amino-acid sequence, 441 residues long: Polyketide methyltransferase ustM (441 aa).

The segment at 266-368 (LEVGAGLGGT…VRKLLRGGGF (103 aa)) is methyltransferase (CMeT) domain.

This sequence belongs to the methyltransferase superfamily.

It participates in secondary metabolite biosynthesis. Polyketide methyltransferase; part of the gene cluster that mediates the biosynthesis of ustilaginoidins, dimeric gamma-naphthopyrones isolated from different fungal species. The first step in the biosynthesis of ustilaginoidins is the production of gamma-naphthopyrone precursor YWA1 by the non-reducing polyketide synthase ustP, via condensation of one acetyl-CoA starter unit with 6 malonyl-CoA units. YWA1 is then probably substrate of the ustZ to yield norrubrofusarin via a dehydration reaction. A key enzyme in the biosynthetic pathway is the laccase ustL, which catalyzes the oxidative dimerization of norrubrofusarin to ustilaginoidin A. It can produce the M- and P-atropisomers in varying amounts, depending on the reaction conditions. For the biosynthesis of 3-methylustilaginoid in derivatives such as chaetochromin A, a methylated derivative of YWA1 is required. The C-methylation is considered to be catalyzed by ustM, the phosphopantetheine attachment site of which indicates that it acts on the growing polyketide chain before release of the product. For the biosynthesis of chaetochromin A, it is assumed that saturation of the D2 double bond takes place before dimerization, and is probably catalyzed by an external reductase because no candidate gene was identified within the cluster. This is Polyketide methyltransferase ustM from Ustilaginoidea virens (Rice false smut fungus).